A 553-amino-acid polypeptide reads, in one-letter code: Glucose-6-phosphate isomerase (553 aa).

Glutamate 355 functions as the Proton donor in the catalytic mechanism. Residues histidine 386 and lysine 513 contribute to the active site.

It belongs to the GPI family.

It is found in the cytoplasm. The catalysed reaction is alpha-D-glucose 6-phosphate = beta-D-fructose 6-phosphate. It functions in the pathway carbohydrate biosynthesis; gluconeogenesis. The protein operates within carbohydrate degradation; glycolysis; D-glyceraldehyde 3-phosphate and glycerone phosphate from D-glucose: step 2/4. In terms of biological role, catalyzes the reversible isomerization of glucose-6-phosphate to fructose-6-phosphate. This is Glucose-6-phosphate isomerase from Baumannia cicadellinicola subsp. Homalodisca coagulata.